The sequence spans 341 residues: Ketol-acid reductoisomerase (NADP(+)) (341 aa).

The region spanning threonine 2–threonine 182 is the KARI N-terminal Rossmann domain. NADP(+) contacts are provided by residues tyrosine 25 to glutamine 28, lysine 48, serine 51, serine 53, and aspartate 83 to glutamine 86. Histidine 108 is a catalytic residue. Glycine 134 is an NADP(+) binding site. Positions threonine 183–asparagine 328 constitute a KARI C-terminal knotted domain. Positions 191, 195, 227, and 231 each coordinate Mg(2+). Residue serine 252 coordinates substrate.

It belongs to the ketol-acid reductoisomerase family. Mg(2+) serves as cofactor.

It carries out the reaction (2R)-2,3-dihydroxy-3-methylbutanoate + NADP(+) = (2S)-2-acetolactate + NADPH + H(+). The catalysed reaction is (2R,3R)-2,3-dihydroxy-3-methylpentanoate + NADP(+) = (S)-2-ethyl-2-hydroxy-3-oxobutanoate + NADPH + H(+). It functions in the pathway amino-acid biosynthesis; L-isoleucine biosynthesis; L-isoleucine from 2-oxobutanoate: step 2/4. The protein operates within amino-acid biosynthesis; L-valine biosynthesis; L-valine from pyruvate: step 2/4. Involved in the biosynthesis of branched-chain amino acids (BCAA). Catalyzes an alkyl-migration followed by a ketol-acid reduction of (S)-2-acetolactate (S2AL) to yield (R)-2,3-dihydroxy-isovalerate. In the isomerase reaction, S2AL is rearranged via a Mg-dependent methyl migration to produce 3-hydroxy-3-methyl-2-ketobutyrate (HMKB). In the reductase reaction, this 2-ketoacid undergoes a metal-dependent reduction by NADPH to yield (R)-2,3-dihydroxy-isovalerate. This is Ketol-acid reductoisomerase (NADP(+)) from Clavibacter sepedonicus (Clavibacter michiganensis subsp. sepedonicus).